Consider the following 84-residue polypeptide: uncharacterized protein (84 aa).

This is an uncharacterized protein from Escherichia coli O6:H1 (strain CFT073 / ATCC 700928 / UPEC).